A 78-amino-acid polypeptide reads, in one-letter code: Delta-conotoxin-like Ai6.1 (78 aa).

Positions 1–22 (MKLTCVMIVAVLFLTAWTFATA) are cleaved as a signal peptide. Positions 23–49 (DDPRNGLGNLFSNAHHEMKNPEASKLN) are excised as a propeptide. 3 disulfide bridges follow: cysteine 53/cysteine 68, cysteine 60/cysteine 72, and cysteine 67/cysteine 77.

This sequence belongs to the conotoxin O1 superfamily. As to expression, expressed by the venom duct.

It is found in the secreted. Its function is as follows. Delta-conotoxins bind to site 6 of voltage-gated sodium channels (Nav) and inhibit the inactivation process. The sequence is that of Delta-conotoxin-like Ai6.1 from Conus ammiralis (Admiral cone).